Here is a 322-residue protein sequence, read N- to C-terminus: ATP-dependent 6-phosphofructokinase (322 aa).

Gly-11 lines the ATP pocket. 21 to 25 (RAVVR) contacts ADP. Residues 72-73 (RC) and 102-105 (GDGS) contribute to the ATP site. Asp-103 serves as a coordination point for Mg(2+). Residue 127 to 129 (TID) coordinates substrate. Catalysis depends on Asp-129, which acts as the Proton acceptor. Arg-156 lines the ADP pocket. Substrate contacts are provided by residues Arg-164 and 171–173 (MGR). ADP-binding positions include 187 to 189 (GAE), Arg-213, and 215 to 217 (KKH). Residues Glu-224, Arg-245, and 251–254 (HVQR) contribute to the substrate site.

This sequence belongs to the phosphofructokinase type A (PFKA) family. ATP-dependent PFK group I subfamily. Prokaryotic clade 'B1' sub-subfamily. As to quaternary structure, homotetramer. It depends on Mg(2+) as a cofactor.

Its subcellular location is the cytoplasm. The enzyme catalyses beta-D-fructose 6-phosphate + ATP = beta-D-fructose 1,6-bisphosphate + ADP + H(+). Its pathway is carbohydrate degradation; glycolysis; D-glyceraldehyde 3-phosphate and glycerone phosphate from D-glucose: step 3/4. With respect to regulation, allosterically activated by ADP and other diphosphonucleosides, and allosterically inhibited by phosphoenolpyruvate. Its function is as follows. Catalyzes the phosphorylation of D-fructose 6-phosphate to fructose 1,6-bisphosphate by ATP, the first committing step of glycolysis. This Staphylococcus aureus (strain MRSA252) protein is ATP-dependent 6-phosphofructokinase.